A 353-amino-acid chain; its full sequence is Protein RecA (353 aa).

Residue 65–72 (GPESSGKT) coordinates ATP.

This sequence belongs to the RecA family.

Its subcellular location is the cytoplasm. Can catalyze the hydrolysis of ATP in the presence of single-stranded DNA, the ATP-dependent uptake of single-stranded DNA by duplex DNA, and the ATP-dependent hybridization of homologous single-stranded DNAs. It interacts with LexA causing its activation and leading to its autocatalytic cleavage. The chain is Protein RecA from Aeromonas salmonicida (strain A449).